We begin with the raw amino-acid sequence, 444 residues long: Argininosuccinate synthase (444 aa).

ATP contacts are provided by residues 17 to 25 and Ala-43; that span reads AFSGGLDTS. Tyr-99 provides a ligand contact to L-citrulline. The ATP site is built by Gly-129 and Thr-131. L-aspartate-binding residues include Thr-131, Asn-135, and Asp-136. Asn-135 contributes to the L-citrulline binding site. Asp-136 contributes to the ATP binding site. L-citrulline is bound by residues Arg-139 and Ser-192. Asp-194 lines the ATP pocket. Residues Thr-201, Glu-203, and Glu-280 each contribute to the L-citrulline site.

The protein belongs to the argininosuccinate synthase family. Type 2 subfamily. As to quaternary structure, homotetramer.

Its subcellular location is the cytoplasm. The catalysed reaction is L-citrulline + L-aspartate + ATP = 2-(N(omega)-L-arginino)succinate + AMP + diphosphate + H(+). It functions in the pathway amino-acid biosynthesis; L-arginine biosynthesis; L-arginine from L-ornithine and carbamoyl phosphate: step 2/3. The polypeptide is Argininosuccinate synthase (Paraburkholderia phymatum (strain DSM 17167 / CIP 108236 / LMG 21445 / STM815) (Burkholderia phymatum)).